The following is a 101-amino-acid chain: Small ribosomal subunit protein bS18c (101 aa).

Belongs to the bacterial ribosomal protein bS18 family. In terms of assembly, part of the 30S ribosomal subunit.

It localises to the plastid. The protein localises to the chloroplast. This Morus indica (Mulberry) protein is Small ribosomal subunit protein bS18c.